Consider the following 282-residue polypeptide: Autophagy protein 5 (282 aa).

K144 participates in a covalent cross-link: Glycyl lysine isopeptide (Lys-Gly) (interchain with G-Cter in ATG12).

This sequence belongs to the ATG5 family. In terms of assembly, conjugated with ATG12. Conjugated to ATG12; which is essential for autophagy.

Its subcellular location is the preautophagosomal structure membrane. Functionally, involved in cytoplasm to vacuole transport (Cvt) and autophagic vesicle formation. Autophagy is essential for maintenance of amino acid levels and protein synthesis under nitrogen starvation. Required for selective autophagic degradation of the nucleus (nucleophagy). Also required for mitophagy, which eliminates defective or superfluous mitochondria in order to fulfill cellular energy requirements and prevent excess ROS production. Conjugation with ATG12, through a ubiquitin-like conjugating system involving ATG7 as an E1-like activating enzyme and ATG10 as an E2-like conjugating enzyme, is essential for its function. The ATG12-ATG5 conjugate acts as an E3-like enzyme which is required for lipidation of ATG8 and ATG8 association to the vesicle membranes. This is Autophagy protein 5 (ATG5) from Scheffersomyces stipitis (strain ATCC 58785 / CBS 6054 / NBRC 10063 / NRRL Y-11545) (Yeast).